The sequence spans 190 residues: dCTP deaminase (190 aa).

113 to 118 is a dCTP binding site; that stretch reads KSTYAR. The active-site Proton donor/acceptor is the Glu139. DCTP is bound by residues Gln158, Tyr172, Lys181, and Gln182.

The protein belongs to the dCTP deaminase family. In terms of assembly, homotrimer.

The catalysed reaction is dCTP + H2O + H(+) = dUTP + NH4(+). Its pathway is pyrimidine metabolism; dUMP biosynthesis; dUMP from dCTP (dUTP route): step 1/2. Functionally, catalyzes the deamination of dCTP to dUTP. The protein is dCTP deaminase of Chlamydia trachomatis serovar A (strain ATCC VR-571B / DSM 19440 / HAR-13).